Here is a 250-residue protein sequence, read N- to C-terminus: Leucyl/phenylalanyl-tRNA--protein transferase (250 aa).

This sequence belongs to the L/F-transferase family.

The protein resides in the cytoplasm. The catalysed reaction is N-terminal L-lysyl-[protein] + L-leucyl-tRNA(Leu) = N-terminal L-leucyl-L-lysyl-[protein] + tRNA(Leu) + H(+). It carries out the reaction N-terminal L-arginyl-[protein] + L-leucyl-tRNA(Leu) = N-terminal L-leucyl-L-arginyl-[protein] + tRNA(Leu) + H(+). The enzyme catalyses L-phenylalanyl-tRNA(Phe) + an N-terminal L-alpha-aminoacyl-[protein] = an N-terminal L-phenylalanyl-L-alpha-aminoacyl-[protein] + tRNA(Phe). Its function is as follows. Functions in the N-end rule pathway of protein degradation where it conjugates Leu, Phe and, less efficiently, Met from aminoacyl-tRNAs to the N-termini of proteins containing an N-terminal arginine or lysine. This Xanthomonas oryzae pv. oryzae (strain MAFF 311018) protein is Leucyl/phenylalanyl-tRNA--protein transferase.